Here is a 326-residue protein sequence, read N- to C-terminus: MRPLMLQGHERSITQIKYNREGDLLFSCSKDQKPNVWYSLNGERLGTYDGHQGAVWCLDVDWESRKLITGAGDMTAKIWDVEYGTVIASIPTKSSVRTSNFSFSGNQAAYSTDKAMGQSCELFLIDVRNADSSLSEQEPTLRIPMTESKITSMLWGPLDETIITGHDNGNIAIWDIRKGQKVVDSGTDHSAGINDMQLSKDGTMFVTASKDTTAKLFDSESLMCLKTYKTERPVNSAAISPIMDHVVLGGGQDAMEVTTTSTKAGKFDSRFFHLIYEEEFARLKGHFGPINSLAFHPDGKSYASGGEDGFVRVQTFDSTYFENIFE.

WD repeat units lie at residues 8–47 (GHER…RLGT), 50–89 (GHQG…VIAS), 145–184 (MTES…KVVD), 188–227 (DHSA…CLKT), and 285–326 (GHFG…NIFE).

This sequence belongs to the eIF-3 subunit I family. Component of the eukaryotic translation initiation factor 3 (eIF-3) complex. The eIF-3 complex interacts with pix.

It is found in the cytoplasm. Its function is as follows. Component of the eukaryotic translation initiation factor 3 (eIF-3) complex, which is involved in protein synthesis of a specialized repertoire of mRNAs and, together with other initiation factors, stimulates binding of mRNA and methionyl-tRNAi to the 40S ribosome. The eIF-3 complex specifically targets and initiates translation of a subset of mRNAs involved in cell proliferation. This chain is Eukaryotic translation initiation factor 3 subunit I, found in Drosophila sechellia (Fruit fly).